The sequence spans 2345 residues: Acetyl-CoA carboxylase 1 (2345 aa).

Met-1 bears the N-acetylmethionine mark. Ser-5, Ser-23, Ser-25, Ser-29, Ser-34, Ser-47, Ser-49, and Ser-52 each carry phosphoserine. Position 57 is a phosphothreonine (Thr-57). Ser-77 bears the Phosphoserine mark. At Ser-79 the chain carries Phosphoserine; by AMPK. The region spanning Val-116–Ala-617 is the Biotin carboxylation domain. The ATP-grasp domain occupies Ser-274–Met-465. Residue Gly-314 to Gly-319 participates in ATP binding. Residues Glu-423, Glu-436, and Asn-438 each contribute to the Mg(2+) site. Glu-423, Glu-436, and Asn-438 together coordinate Mn(2+). Residue Arg-440 is part of the active site. Thr-609 is subject to Phosphothreonine. Residues Phe-744–Gln-818 form the Biotinyl-binding domain. N6-biotinyllysine is present on Lys-785. Residue Ser-834 is modified to Phosphoserine. Phosphoserine; by AMPK; in vitro occurs at positions 1200 and 1215. At Ser-1217 the chain carries Phosphoserine. Thr-1226 carries the phosphothreonine modification. Phosphoserine is present on residues Ser-1258, Ser-1262, and Ser-1272. At Lys-1333 the chain carries N6-acetyllysine. Residues Pro-1575 to Asn-1913 form the CoA carboxyltransferase N-terminal domain. The tract at residues Pro-1575–Ser-2233 is carboxyltransferase. CoA-binding residues include Arg-1822, Lys-2126, and Arg-2128. The CoA carboxyltransferase C-terminal domain maps to Pro-1917 to Ser-2233. Phosphothreonine is present on Thr-2152.

As to quaternary structure, monomer, homodimer, and homotetramer. Can form filamentous polymers. Interacts in its inactive phosphorylated form with the BRCT domains of BRCA1 which prevents ACACA dephosphorylation and inhibits lipid synthesis. Interacts with MID1IP1; interaction with MID1IP1 promotes oligomerization and increases its activity. The cofactor is Mg(2+). Mn(2+) is required as a cofactor. It depends on biotin as a cofactor. In terms of processing, the N-terminus is blocked. Post-translationally, phosphorylation on Ser-1262 is required for interaction with BRCA1. Phosphorylation at Ser-79 by AMPK inactivates enzyme activity. Phosphorylated in vitro at Ser-1200 and Ser-1215 by AMPK; the relevance of phosphorylation of these sites in vivo is however unclear. In terms of processing, the biotin cofactor is covalently attached to the central biotinyl-binding domain and is required for the catalytic activity.

The protein localises to the cytoplasm. It localises to the cytosol. It carries out the reaction hydrogencarbonate + acetyl-CoA + ATP = malonyl-CoA + ADP + phosphate + H(+). The protein operates within lipid metabolism; malonyl-CoA biosynthesis; malonyl-CoA from acetyl-CoA: step 1/1. Its activity is regulated as follows. Inhibited by phosphorylation. Citrate promotes oligomerization of the protein into filaments that correspond to the most active form of the carboxylase. Functionally, cytosolic enzyme that catalyzes the carboxylation of acetyl-CoA to malonyl-CoA, the first and rate-limiting step of de novo fatty acid biosynthesis. This is a 2 steps reaction starting with the ATP-dependent carboxylation of the biotin carried by the biotin carboxyl carrier (BCC) domain followed by the transfer of the carboxyl group from carboxylated biotin to acetyl-CoA. The chain is Acetyl-CoA carboxylase 1 from Rattus norvegicus (Rat).